A 266-amino-acid polypeptide reads, in one-letter code: Trehalose-6-phosphate phosphatase (266 aa).

Catalysis depends on Asp20, which acts as the Nucleophile. Asp20, Asp22, and Asp198 together coordinate Mg(2+). Substrate is bound at residue 20 to 22 (DLD).

This sequence belongs to the trehalose phosphatase family. Requires Mg(2+) as cofactor. It depends on Mn(2+) as a cofactor. Co(2+) is required as a cofactor. Zn(2+) serves as cofactor.

It catalyses the reaction alpha,alpha-trehalose 6-phosphate + H2O = alpha,alpha-trehalose + phosphate. Its pathway is glycan biosynthesis; trehalose biosynthesis. In terms of biological role, removes the phosphate from trehalose 6-phosphate (Tre6P) to produce free trehalose. Also catalyzes the dephosphorylation of glucose-6-phosphate (Glu6P) and 2-deoxyglucose-6-phosphate (2dGlu6P). The chain is Trehalose-6-phosphate phosphatase (otsB) from Escherichia coli (strain K12).